The following is a 363-amino-acid chain: NAD(P)H-quinone oxidoreductase subunit 1, chloroplastic (363 aa).

A run of 7 helical transmembrane segments spans residues Phe-30–Leu-50, Ile-104–Leu-124, Ile-129–Gly-149, Tyr-248–Ser-268, Leu-269–Phe-289, Val-300–Ile-320, and Leu-336–Thr-356.

The protein belongs to the complex I subunit 1 family. In terms of assembly, NDH is composed of at least 16 different subunits, 5 of which are encoded in the nucleus.

It is found in the plastid. The protein localises to the chloroplast thylakoid membrane. It catalyses the reaction a plastoquinone + NADH + (n+1) H(+)(in) = a plastoquinol + NAD(+) + n H(+)(out). It carries out the reaction a plastoquinone + NADPH + (n+1) H(+)(in) = a plastoquinol + NADP(+) + n H(+)(out). In terms of biological role, NDH shuttles electrons from NAD(P)H:plastoquinone, via FMN and iron-sulfur (Fe-S) centers, to quinones in the photosynthetic chain and possibly in a chloroplast respiratory chain. The immediate electron acceptor for the enzyme in this species is believed to be plastoquinone. Couples the redox reaction to proton translocation, and thus conserves the redox energy in a proton gradient. In Morus indica (Mulberry), this protein is NAD(P)H-quinone oxidoreductase subunit 1, chloroplastic.